Consider the following 362-residue polypeptide: Stress response regulator protein 1 (362 aa).

Disordered stretches follow at residues 1–39 and 163–188; these read MTRL…SLVQ and TLKS…ETKT. Low complexity predominate over residues 19 to 39; that stretch reads PSQLLHSASLSSSPSSPSLVQ. In terms of domain architecture, Response regulatory spans 209 to 327; that stretch reads KFLLVDDNLI…LDFMANVIDE (119 aa). Residue aspartate 260 is modified to 4-aspartylphosphate.

Required for stress adaptation, morphogenesis and virulence. The sequence is that of Stress response regulator protein 1 (SRR1) from Lodderomyces elongisporus (strain ATCC 11503 / CBS 2605 / JCM 1781 / NBRC 1676 / NRRL YB-4239) (Yeast).